The chain runs to 116 residues: Somatostatin (116 aa).

Positions 1–24 (MLSCRLQCALAALCIVLALGGVTG) are cleaved as a signal peptide. Residues 35–88 (LQKSLAAATGKQELAKYFLAELLSEPNQTENDALEPEDLPQAAEQDEMRLELQR) constitute a propeptide that is removed on maturation. Thr43 is subject to Threonine amide. Cys105 and Cys116 are disulfide-bonded.

This sequence belongs to the somatostatin family. Post-translationally, C-terminal amidation of the neuronostatin peptide is required for its biological activity, including for the regulation of mean arterial pressure. As to expression, in the pancreas, somatostatin is expressed in delta cells of the islets of Langerhans. In the stomach, it is expressed in parietal cells of oxyntic mucosa and in the small intestine, it is found in the villus (at protein level). Neuronostatin is expressed in the pancreas in delta cells of the islets of Langerhans, as well as in the stomach, in parietal cells of oxyntic mucosa and in the small intestine, in the villus (at protein level).

The protein resides in the secreted. Inhibits the secretion of pituitary hormones, including that of growth hormone/somatotropin (GH1), PRL, ACTH, luteinizing hormone (LH) and TSH. Also impairs ghrelin- and GnRH-stimulated secretion of GH1 and LH; the inhibition of ghrelin-stimulated secretion of GH1 can be further increased by neuronostatin. In terms of biological role, may enhance low-glucose-induced glucagon release by pancreatic alpha cells. This effect may be mediated by binding to GPR107 and PKA activation. May regulate cardiac contractile function. May compromise cardiomyocyte viability. In the central nervous system, may impair memory retention and may affect hippocampal excitability. May also have anxiolytic and anorexigenic effects. May play a role in arterial pressure regulation. May inhibit basal, but not ghrelin- or GnRH-stimulated secretion of GH1 or LH, but does not affect the release of other pituitary hormones, including PRL, ACTH, FSH or TSH. Potentiates inhibitory action of somatostatin on ghrelin-stimulated secretion of GH1, but not that on GnRH-stimulated secretion of LH. The chain is Somatostatin (Sst) from Mus musculus (Mouse).